The sequence spans 90 residues: Probable Fe(2+)-trafficking protein (90 aa).

Belongs to the Fe(2+)-trafficking protein family.

Its function is as follows. Could be a mediator in iron transactions between iron acquisition and iron-requiring processes, such as synthesis and/or repair of Fe-S clusters in biosynthetic enzymes. The protein is Probable Fe(2+)-trafficking protein of Xylella fastidiosa (strain 9a5c).